The chain runs to 344 residues: tRNA N6-adenosine threonylcarbamoyltransferase (344 aa).

Positions 111 and 115 each coordinate Fe cation. Substrate is bound by residues 133–137 (VVSGG), aspartate 166, glycine 179, aspartate 183, and asparagine 270. Residue aspartate 298 coordinates Fe cation.

This sequence belongs to the KAE1 / TsaD family. Requires Fe(2+) as cofactor.

The protein resides in the cytoplasm. It catalyses the reaction L-threonylcarbamoyladenylate + adenosine(37) in tRNA = N(6)-L-threonylcarbamoyladenosine(37) in tRNA + AMP + H(+). Required for the formation of a threonylcarbamoyl group on adenosine at position 37 (t(6)A37) in tRNAs that read codons beginning with adenine. Is involved in the transfer of the threonylcarbamoyl moiety of threonylcarbamoyl-AMP (TC-AMP) to the N6 group of A37, together with TsaE and TsaB. TsaD likely plays a direct catalytic role in this reaction. In Persephonella marina (strain DSM 14350 / EX-H1), this protein is tRNA N6-adenosine threonylcarbamoyltransferase.